Reading from the N-terminus, the 457-residue chain is tRNA modification GTPase MnmE (457 aa).

(6S)-5-formyl-5,6,7,8-tetrahydrofolate contacts are provided by Arg-23, Glu-86, and Arg-125. The 157-residue stretch at Gly-221–Ile-377 folds into the TrmE-type G domain. Asn-231 provides a ligand contact to K(+). GTP is bound by residues Asn-231 to Ser-236, Thr-250 to Thr-256, and Asp-275 to Gly-278. Ser-235 contributes to the Mg(2+) binding site. Residues Thr-250, Val-252, and Thr-255 each coordinate K(+). Position 256 (Thr-256) interacts with Mg(2+). A (6S)-5-formyl-5,6,7,8-tetrahydrofolate-binding site is contributed by Lys-457.

This sequence belongs to the TRAFAC class TrmE-Era-EngA-EngB-Septin-like GTPase superfamily. TrmE GTPase family. As to quaternary structure, homodimer. Heterotetramer of two MnmE and two MnmG subunits. K(+) is required as a cofactor.

The protein localises to the cytoplasm. Its function is as follows. Exhibits a very high intrinsic GTPase hydrolysis rate. Involved in the addition of a carboxymethylaminomethyl (cmnm) group at the wobble position (U34) of certain tRNAs, forming tRNA-cmnm(5)s(2)U34. This Geobacter metallireducens (strain ATCC 53774 / DSM 7210 / GS-15) protein is tRNA modification GTPase MnmE.